The chain runs to 874 residues: Alanine--tRNA ligase (874 aa).

4 residues coordinate Zn(2+): His562, His566, Cys664, and His668.

This sequence belongs to the class-II aminoacyl-tRNA synthetase family. Zn(2+) is required as a cofactor.

It localises to the cytoplasm. The enzyme catalyses tRNA(Ala) + L-alanine + ATP = L-alanyl-tRNA(Ala) + AMP + diphosphate. Catalyzes the attachment of alanine to tRNA(Ala) in a two-step reaction: alanine is first activated by ATP to form Ala-AMP and then transferred to the acceptor end of tRNA(Ala). Also edits incorrectly charged Ser-tRNA(Ala) and Gly-tRNA(Ala) via its editing domain. The chain is Alanine--tRNA ligase from Shewanella denitrificans (strain OS217 / ATCC BAA-1090 / DSM 15013).